The sequence spans 441 residues: Carbohydrate sulfotransferase 3 (441 aa).

At methionine 1–arginine 4 the chain is on the cytoplasmic side. The helical; Signal-anchor for type II membrane protein transmembrane segment at serine 5–glutamate 21 threads the bilayer. Residues lysine 22 to threonine 441 are Lumenal-facing. Asparagine 47 and asparagine 58 each carry an N-linked (GlcNAc...) asparagine glycan. Threonine 106–phenylalanine 112 provides a ligand contact to 3'-phosphoadenylyl sulfate. Asparagine 221 carries an N-linked (GlcNAc...) asparagine glycan. Position 266 to 274 (arginine 266 to serine 274) interacts with 3'-phosphoadenylyl sulfate. Asparagine 427 is a glycosylation site (N-linked (GlcNAc...) asparagine).

The protein belongs to the sulfotransferase 1 family. Gal/GlcNAc/GalNAc subfamily. Post-translationally, N-glycosylated. In terms of tissue distribution, in electric organ, it is moderately expressed in spinal cord and electric lobe and undetectable in non-neural tissues. Expressed in a punctate distribution in the innervated portion of electrocytes. In the CNS, it is localized within the somas of motor neurons and neurons of the electromotor nucleus.

The protein resides in the golgi apparatus membrane. It carries out the reaction chondroitin beta-D-glucuronate + n 3'-phosphoadenylyl sulfate = chondroitin 6'-sulfate + n adenosine 3',5'-bisphosphate + n H(+). The enzyme catalyses 3'-phosphoadenylyl sulfate + keratan = adenosine 3',5'-bisphosphate + keratan 6'-sulfate.. In terms of biological role, sulfotransferase that utilizes 3'-phospho-5'-adenylyl sulfate (PAPS) as sulfonate donor to catalyze the transfer of sulfate to position 6 of the N-acetylgalactosamine (GalNAc) residue of chondroitin. Chondroitin sulfate constitutes the predominant proteoglycan present in cartilage and is distributed on the surfaces of many cells and extracellular matrices. Catalyzes with a lower efficiency the sulfation of Gal residues of keratan sulfate, another glycosaminoglycan. Can also catalyze the sulfation of the Gal residues in sialyl N-acetyllactosamine (sialyl LacNAc) oligosaccharides. In Tetronarce californica (Pacific electric ray), this protein is Carbohydrate sulfotransferase 3 (CHST3).